The primary structure comprises 386 residues: Acetylornithine aminotransferase (386 aa).

Pyridoxal 5'-phosphate-binding positions include 94-95 and phenylalanine 121; that span reads GT. Position 124 (arginine 124) interacts with N(2)-acetyl-L-ornithine. 206–209 is a binding site for pyridoxal 5'-phosphate; the sequence is DEVQ. Lysine 235 is modified (N6-(pyridoxal phosphate)lysine). A N(2)-acetyl-L-ornithine-binding site is contributed by serine 263. Threonine 264 serves as a coordination point for pyridoxal 5'-phosphate.

It belongs to the class-III pyridoxal-phosphate-dependent aminotransferase family. ArgD subfamily. Homodimer. Pyridoxal 5'-phosphate serves as cofactor.

Its subcellular location is the cytoplasm. The enzyme catalyses N(2)-acetyl-L-ornithine + 2-oxoglutarate = N-acetyl-L-glutamate 5-semialdehyde + L-glutamate. It functions in the pathway amino-acid biosynthesis; L-arginine biosynthesis; N(2)-acetyl-L-ornithine from L-glutamate: step 4/4. The sequence is that of Acetylornithine aminotransferase from Listeria monocytogenes serovar 1/2a (strain ATCC BAA-679 / EGD-e).